A 311-amino-acid chain; its full sequence is Coproporphyrin III ferrochelatase 1 (311 aa).

Fe-coproporphyrin III is bound by residues Tyr-12, Arg-29, 45–46 (RY), Ser-53, and Tyr-124. Fe(2+)-binding residues include His-182 and Glu-263.

This sequence belongs to the ferrochelatase family.

It localises to the cytoplasm. The catalysed reaction is Fe-coproporphyrin III + 2 H(+) = coproporphyrin III + Fe(2+). The protein operates within porphyrin-containing compound metabolism; protoheme biosynthesis. Functionally, involved in coproporphyrin-dependent heme b biosynthesis. Catalyzes the insertion of ferrous iron into coproporphyrin III to form Fe-coproporphyrin III. This is Coproporphyrin III ferrochelatase 1 from Bacillus anthracis.